The chain runs to 333 residues: MIETLLQSPSSWTNFFIFFGLAVLLLFAVLGFVTYGILAERKVMGFMQGRIGPNQVGGRFGLLQTVADVLKLLLKEDSIPKAADKPLFILAPVIAFAPAFMVLAVIPFTDKFQFADIGVGLLYYIAVSGITTIGVVTGGWASNNKYSLLGGMRAAAQMISYEIPLVMSVIGIVLLAGSLNLNEIVAAQENVWYIFVQPIGFVVFLIAAVAELNRTPFDLPEAESELVSGYHTEYSGFRWAFFMLSEYVYFFGMASLITVLFLGGWNPVMFLGFIPGAVWFALKFSSVVFLLIWFRVTFPRIRGDQLMEFGWKVLLPIALANIFLTALIKELFF.

The next 8 membrane-spanning stretches (helical) occupy residues 15–35 (FFIFFGLAVLLLFAVLGFVTY), 88–108 (FILAPVIAFAPAFMVLAVIPF), 117–137 (IGVGLLYYIAVSGITTIGVVT), 159–179 (ISYEIPLVMSVIGIVLLAGSL), 191–211 (VWYIFVQPIGFVVFLIAAVAE), 239–259 (WAFFMLSEYVYFFGMASLITV), 274–296 (IPGAVWFALKFSSVVFLLIWFRV), and 313–333 (VLLPIALANIFLTALIKELFF).

This sequence belongs to the complex I subunit 1 family. NDH-1 is composed of 14 different subunits. Subunits NuoA, H, J, K, L, M, N constitute the membrane sector of the complex.

The protein resides in the cell membrane. It carries out the reaction a quinone + NADH + 5 H(+)(in) = a quinol + NAD(+) + 4 H(+)(out). Functionally, NDH-1 shuttles electrons from NADH, via FMN and iron-sulfur (Fe-S) centers, to quinones in the respiratory chain. The immediate electron acceptor for the enzyme in this species is believed to be ubiquinone. Couples the redox reaction to proton translocation (for every two electrons transferred, four hydrogen ions are translocated across the cytoplasmic membrane), and thus conserves the redox energy in a proton gradient. This subunit may bind ubiquinone. The polypeptide is NADH-quinone oxidoreductase subunit H (Bacillus anthracis (strain A0248)).